A 150-amino-acid chain; its full sequence is Kirola (150 aa).

At M1 the chain carries N-acetylmethionine.

This sequence belongs to the MLP family. As to quaternary structure, monomer. The N-terminus is blocked.

In Actinidia deliciosa (Kiwi), this protein is Kirola.